Reading from the N-terminus, the 297-residue chain is UDP-N-acetylenolpyruvoylglucosamine reductase (297 aa).

An FAD-binding PCMH-type domain is found at 22–195 (RVGGPAQYYA…LAGRFRLHRA (174 aa)). Arginine 169 is an active-site residue. Serine 223 functions as the Proton donor in the catalytic mechanism. Residue glutamate 293 is part of the active site.

Belongs to the MurB family. The cofactor is FAD.

The protein localises to the cytoplasm. It catalyses the reaction UDP-N-acetyl-alpha-D-muramate + NADP(+) = UDP-N-acetyl-3-O-(1-carboxyvinyl)-alpha-D-glucosamine + NADPH + H(+). It participates in cell wall biogenesis; peptidoglycan biosynthesis. Cell wall formation. The protein is UDP-N-acetylenolpyruvoylglucosamine reductase of Chloroflexus aggregans (strain MD-66 / DSM 9485).